The following is a 140-amino-acid chain: Chorion class A protein Ld2/Ld41 (140 aa).

Residues 1–21 (MNSFAFLLVCIQACLVQSVFS) form the signal peptide.

This sequence belongs to the chorion protein family.

This protein is one of many from the eggshell of the gypsy moth. The sequence is that of Chorion class A protein Ld2/Ld41 from Lymantria dispar (Gypsy moth).